A 358-amino-acid chain; its full sequence is Insulin gene enhancer protein ISL-2A (358 aa).

2 consecutive LIM zinc-binding domains span residues 27-80 (CVGC…CKRD) and 89-143 (CANC…RADH). Positions 190 to 249 (TTRVRTVLNEKQLHTLRTCYNANPRPDALMKEQLVEMTGLSPRVIRVWFQNKRCKDKKRS) form a DNA-binding region, homeobox. The segment covering 325 to 335 (ESGSMGNSSGS) has biased composition (low complexity). Residues 325 to 358 (ESGSMGNSSGSDVTSLSSQLPDTPNSMVASPVDT) are disordered. Residues 336–358 (DVTSLSSQLPDTPNSMVASPVDT) show a composition bias toward polar residues.

It localises to the nucleus. Binds to one of the cis-acting domain of the insulin gene enhancer. May be involved in subtype specialization of primary motoneurons. The chain is Insulin gene enhancer protein ISL-2A (isl2a) from Oncorhynchus tshawytscha (Chinook salmon).